The following is a 258-amino-acid chain: Alcohol dehydrogenase 2 (258 aa).

9 to 33 (IFVGGLGFIGYEACKQLMAKNMASF) is an NAD(+) binding site. Serine 137 contacts substrate. The Proton acceptor role is filled by tyrosine 150.

Belongs to the short-chain dehydrogenases/reductases (SDR) family. In terms of assembly, homodimer.

It catalyses the reaction a primary alcohol + NAD(+) = an aldehyde + NADH + H(+). It carries out the reaction a secondary alcohol + NAD(+) = a ketone + NADH + H(+). In Ceratitis cosyra (Mango fruit fly), this protein is Alcohol dehydrogenase 2 (ADH2).